We begin with the raw amino-acid sequence, 1130 residues long: MHC class II transactivator (1130 aa).

Positions 94-132 are required for acetyltransferase activity; sequence AYANIAELDQYVFQDSQLEGLSKDIFKHIGPDEVIGESM. The segment at 269–303 is disordered; the sequence is PSGFTVHGLPTSPDRPGSTSPFAPSATDLPSMPEP. In terms of domain architecture, NACHT spans 414-724; it reads RVIAVLGKAG…CFLGALWLAL (311 aa). A GTP-binding site is contributed by 420–427; it reads GKAGQGKS. 4 LRR repeats span residues 985–1008, 1016–1037, 1045–1066, and 1073–1093; these read SLQH…SQLS, SLET…KLAE, SLLR…SLAR, and SLRV…QQLA.

Interacts with ZXDA and ZXDC. Interacts with PML (isoform PML-2). Interacts with TAF7; interaction inhibits CIITA acetyltransferase activity, thereby repressing transcription. In terms of processing, autophosphorylated, affecting interaction with TAF7.

The protein localises to the nucleus. It is found in the PML body. It catalyses the reaction L-seryl-[protein] + ATP = O-phospho-L-seryl-[protein] + ADP + H(+). It carries out the reaction L-threonyl-[protein] + ATP = O-phospho-L-threonyl-[protein] + ADP + H(+). Its function is as follows. Essential for transcriptional activity of the HLA class II promoter; activation is via the proximal promoter. Does not bind DNA. May act in a coactivator-like fashion through protein-protein interactions by contacting factors binding to the proximal MHC class II promoter, to elements of the transcription machinery, or both PubMed:8402893, PubMed:7749984,. Alternatively it may activate HLA class II transcription by modifying proteins that bind to the MHC class II promoter. Also mediates enhanced MHC class I transcription; the promoter element requirements for CIITA-mediated transcription are distinct from those of constitutive MHC class I transcription, and CIITA can functionally replace TAF1 at these genes. Activates CD74 transcription. Exhibits intrinsic GTP-stimulated acetyltransferase activity. Exhibits serine/threonine protein kinase activity: can phosphorylate the TFIID component TAF7, the RAP74 subunit of the general transcription factor TFIIF, histone H2B at 'Ser-37' and other histones (in vitro). Has antiviral activity against Ebola virus and coronaviruses, including SARS-CoV-2. Induces resistance by up-regulation of the p41 isoform of CD74, which blocks cathepsin-mediated cleavage of viral glycoproteins, thereby preventing viral fusion. In terms of biological role, exhibits dominant-negative suppression of MHC class II gene expression. The protein is MHC class II transactivator of Homo sapiens (Human).